The sequence spans 300 residues: Vetispiradiene synthase 2 (300 aa).

Asp-54, Asp-58, Asp-197, Thr-201, and Glu-205 together coordinate Mg(2+). The short motif at 54–58 (DDTFD) is the DDXXD motif element.

It belongs to the terpene synthase family. Tpsa subfamily. The cofactor is Mg(2+).

The protein localises to the cytoplasm. It carries out the reaction (2E,6E)-farnesyl diphosphate = (-)-vetispiradiene + diphosphate. It participates in secondary metabolite biosynthesis; terpenoid biosynthesis. Its function is as follows. Sesquiterpene synthase that catalyzes the formation of vetispiradiene from trans,trans-farnesyl diphosphate. The initial internal cyclization produces the monocyclic intermediate germacrene A. In Hyoscyamus muticus (Egyptian henbane), this protein is Vetispiradiene synthase 2.